Reading from the N-terminus, the 153-residue chain is Superoxide dismutase [Cu-Zn] (153 aa).

Cu cation is bound by residues His45, His47, and His62. Cys56 and Cys145 are disulfide-bonded. Residues His62, His70, His79, and Asp82 each coordinate Zn(2+). His119 provides a ligand contact to Cu cation.

This sequence belongs to the Cu-Zn superoxide dismutase family. Homodimer. Cu cation serves as cofactor. Requires Zn(2+) as cofactor.

The protein resides in the cytoplasm. The enzyme catalyses 2 superoxide + 2 H(+) = H2O2 + O2. Destroys radicals which are normally produced within the cells and which are toxic to biological systems. The sequence is that of Superoxide dismutase [Cu-Zn] from Ceratitis capitata (Mediterranean fruit fly).